A 71-amino-acid polypeptide reads, in one-letter code: Conotoxin Vc6.12 (71 aa).

A signal peptide spans 1–19; it reads MQKLIILLLVAAVLMSTQA. Residues 20-43 constitute a propeptide that is removed on maturation; sequence LFQEKRPMKKINFLSKGKTDAEKQ. 3 cysteine pairs are disulfide-bonded: Cys48–Cys62, Cys55–Cys66, and Cys61–Cys70.

This sequence belongs to the conotoxin O2 superfamily. As to expression, expressed by the venom duct.

It localises to the secreted. In terms of biological role, inhibits voltage-gated ion channels. The protein is Conotoxin Vc6.12 of Conus victoriae (Queen Victoria cone).